The primary structure comprises 240 residues: Proteasome subunit alpha (240 aa).

The protein belongs to the peptidase T1A family. In terms of assembly, the 20S proteasome core is composed of 14 alpha and 14 beta subunits that assemble into four stacked heptameric rings, resulting in a barrel-shaped structure. The two inner rings, each composed of seven catalytic beta subunits, are sandwiched by two outer rings, each composed of seven alpha subunits. The catalytic chamber with the active sites is on the inside of the barrel. Has a gated structure, the ends of the cylinder being occluded by the N-termini of the alpha-subunits. Is capped at one or both ends by the proteasome regulatory ATPase, PAN.

It localises to the cytoplasm. The formation of the proteasomal ATPase PAN-20S proteasome complex, via the docking of the C-termini of PAN into the intersubunit pockets in the alpha-rings, triggers opening of the gate for substrate entry. Interconversion between the open-gate and close-gate conformations leads to a dynamic regulation of the 20S proteasome proteolysis activity. Its function is as follows. Component of the proteasome core, a large protease complex with broad specificity involved in protein degradation. This Metallosphaera sedula (strain ATCC 51363 / DSM 5348 / JCM 9185 / NBRC 15509 / TH2) protein is Proteasome subunit alpha.